We begin with the raw amino-acid sequence, 352 residues long: Organic solute transporter subunit alpha (352 aa).

At Met1–Asp45 the chain is on the extracellular side. An N-linked (GlcNAc...) asparagine glycan is attached at Asn22. A helical transmembrane segment spans residues Ile46–Ile66. Topologically, residues Val67 to Thr82 are cytoplasmic. A helical membrane pass occupies residues Leu83 to Val103. Over Pro104 to Met108 the chain is Extracellular. The helical transmembrane segment at Phe109–Ile129 threads the bilayer. The Cytoplasmic portion of the chain corresponds to Val130–Lys173. A helical transmembrane segment spans residues Ile174–Val194. The Extracellular segment spans residues Val195 to Thr210. The helical transmembrane segment at Ser211–Val231 threads the bilayer. Topologically, residues Asn232–Lys250 are cytoplasmic. Residues Phe251 to Leu271 traverse the membrane as a helical segment. Topologically, residues Ala272–Asn294 are extracellular. The helical transmembrane segment at Gln295–Tyr312 threads the bilayer. Topologically, residues Arg313–Ile352 are cytoplasmic.

The protein belongs to the OST-alpha family. In terms of assembly, interacts with slc51b. The Ost-alpha/Ost-beta complex is a heterodimer composed of alpha (slc51a) and beta (slc51b) subunit. Expressed in liver.

It localises to the cell membrane. The protein localises to the endoplasmic reticulum membrane. It carries out the reaction taurocholate(out) = taurocholate(in). It catalyses the reaction prostaglandin E2(out) = prostaglandin E2(in). The enzyme catalyses estrone 3-sulfate(out) = estrone 3-sulfate(in). The catalysed reaction is dehydroepiandrosterone 3-sulfate(out) = dehydroepiandrosterone 3-sulfate(in). It carries out the reaction tauroursodeoxycholate(out) = tauroursodeoxycholate(in). It catalyses the reaction glycoursodeoxycholate(out) = glycoursodeoxycholate(in). The enzyme catalyses glycocholate(out) = glycocholate(in). The catalysed reaction is taurochenodeoxycholate(out) = taurochenodeoxycholate(in). It carries out the reaction glycochenodeoxycholate(out) = glycochenodeoxycholate(in). It catalyses the reaction taurodeoxycholate(out) = taurodeoxycholate(in). The enzyme catalyses glycodeoxycholate(out) = glycodeoxycholate(in). In terms of biological role, essential component of the Ost-alpha/Ost-beta complex, a heterodimer that acts as the intestinal basolateral transporter responsible for the translocation of bile acids (such as taurocholate), steroids (such as estrone sulfate), and eicosanoids (such as prostaglandin E2). In Leucoraja erinaceus (Little skate), this protein is Organic solute transporter subunit alpha (slc51a).